The chain runs to 204 residues: Holliday junction branch migration complex subunit RuvA (204 aa).

A domain I region spans residues 1–64; it reads MIGRLQGILL…EDAHLLFGFA (64 aa). Residues 65–143 form a domain II region; sequence QKTDRTLFRE…GVKQSDFFVE (79 aa). Positions 144-155 are flexible linker; the sequence is STHIPLSPSIES. The segment at 156-204 is domain III; that stretch reads HSESSSDEAISALIALGYKPVEAEKMVKRVAKPELTSEQVIREALKAAL.

It belongs to the RuvA family. Homotetramer. Forms an RuvA(8)-RuvB(12)-Holliday junction (HJ) complex. HJ DNA is sandwiched between 2 RuvA tetramers; dsDNA enters through RuvA and exits via RuvB. An RuvB hexamer assembles on each DNA strand where it exits the tetramer. Each RuvB hexamer is contacted by two RuvA subunits (via domain III) on 2 adjacent RuvB subunits; this complex drives branch migration. In the full resolvosome a probable DNA-RuvA(4)-RuvB(12)-RuvC(2) complex forms which resolves the HJ.

The protein resides in the cytoplasm. The RuvA-RuvB-RuvC complex processes Holliday junction (HJ) DNA during genetic recombination and DNA repair, while the RuvA-RuvB complex plays an important role in the rescue of blocked DNA replication forks via replication fork reversal (RFR). RuvA specifically binds to HJ cruciform DNA, conferring on it an open structure. The RuvB hexamer acts as an ATP-dependent pump, pulling dsDNA into and through the RuvAB complex. HJ branch migration allows RuvC to scan DNA until it finds its consensus sequence, where it cleaves and resolves the cruciform DNA. The sequence is that of Holliday junction branch migration complex subunit RuvA from Haemophilus influenzae (strain PittEE).